A 616-amino-acid polypeptide reads, in one-letter code: Chaperone protein HscA (616 aa).

The protein belongs to the heat shock protein 70 family.

Its function is as follows. Chaperone involved in the maturation of iron-sulfur cluster-containing proteins. Has a low intrinsic ATPase activity which is markedly stimulated by HscB. Involved in the maturation of IscU. The chain is Chaperone protein HscA from Salmonella paratyphi C (strain RKS4594).